Here is a 263-residue protein sequence, read N- to C-terminus: tRNA (guanine-N(1)-)-methyltransferase (263 aa).

Residues G113 and 137-142 (LGDYVL) contribute to the S-adenosyl-L-methionine site.

The protein belongs to the RNA methyltransferase TrmD family. In terms of assembly, homodimer.

The protein resides in the cytoplasm. The catalysed reaction is guanosine(37) in tRNA + S-adenosyl-L-methionine = N(1)-methylguanosine(37) in tRNA + S-adenosyl-L-homocysteine + H(+). Functionally, specifically methylates guanosine-37 in various tRNAs. This chain is tRNA (guanine-N(1)-)-methyltransferase, found in Renibacterium salmoninarum (strain ATCC 33209 / DSM 20767 / JCM 11484 / NBRC 15589 / NCIMB 2235).